A 572-amino-acid chain; its full sequence is Cell cycle protein kinase DBF2 (572 aa).

A phosphoserine mark is found at Ser17, Ser20, and Ser74. The region spanning 177 to 477 is the Protein kinase domain; the sequence is FEMITQVGQG…FEHVKRMSYF (301 aa). Residues 183–191 and Lys206 each bind ATP; that span reads VGQGGYGQV. The Proton acceptor role is filled by Asp300. Ser374 carries the post-translational modification Phosphoserine; by CDC15. The AGC-kinase C-terminal domain maps to 478 to 555; sequence ADINFSTLRS…RHRNGKQGSS (78 aa). Phosphothreonine; by CDC15 is present on Thr544.

The protein belongs to the protein kinase superfamily. Ser/Thr protein kinase family. As to quaternary structure, interacts with MOB1. MOB1-binding is required for a late mitotic event. Phosphorylation of Ser-374 and Thr-544 by CDC15 is essential for activation of DBF2 kinase activity.

It localises to the cytoplasm. The protein resides in the cytoskeleton. The protein localises to the microtubule organizing center. Its subcellular location is the spindle pole body. It is found in the bud neck. It localises to the nucleus. It carries out the reaction L-seryl-[protein] + ATP = O-phospho-L-seryl-[protein] + ADP + H(+). The catalysed reaction is L-threonyl-[protein] + ATP = O-phospho-L-threonyl-[protein] + ADP + H(+). Its activity is regulated as follows. Kinase activity is regulated by BUB2, CDC15 and CDC5, and is maximal during nuclear division. CDK1 kinase inhibits cellular DBF2-MOB1 kinase activity via phosphorylation of both CDC15 and MOB1. In terms of biological role, ser/Thr-protein kinase involved in the mitotic exit network (MEN) and required after the metaphase to anaphase cell cycle transition. Phosphorylates CHS2 to regulate its dynamics and chitin synthesis at the division site during cytokinesis. Coordinates septin and actomyosin ring (AMR) functions during cytokinesis through the phosphorylation of HOF1. In complex with MOB1, phosphorylates CDC14 at sites adjacent to its nuclear localization sequence, thereby retaining CDC14 in the cytoplasm. Also binds to SWI5 and CLB2 mRNAs cotranscriptionally to regulate their decay. In the nucleus, the DBF2-MOB1 complex regulates passenger protein localization during anaphase. Mediates sorbic acid stress tolerance through promoting vacuolar H(+)-ATPase function, probably through phosphorylation of VMA1 and VMA2 subunits. The chain is Cell cycle protein kinase DBF2 (DBF2) from Saccharomyces cerevisiae (strain ATCC 204508 / S288c) (Baker's yeast).